The chain runs to 321 residues: uncharacterized protein (321 aa).

The protein belongs to the NAD(P)-dependent epimerase/dehydratase family.

This is an uncharacterized protein from Staphylococcus aureus (strain MRSA252).